The primary structure comprises 428 residues: CinA-like protein (428 aa).

This sequence belongs to the CinA family.

This chain is CinA-like protein, found in Endomicrobium trichonymphae.